The following is a 649-amino-acid chain: Putative cystathionine gamma-synthase YML082W (649 aa).

The disordered stretch occupies residues 242-273; it reads NEANHGEDHDGGISGEVDSQEEPHNGLVSTIP. A Phosphoserine modification is found at serine 287. N6-(pyridoxal phosphate)lysine is present on lysine 451.

Belongs to the trans-sulfuration enzymes family. MET7 subfamily. Pyridoxal 5'-phosphate serves as cofactor.

It catalyses the reaction O-succinyl-L-homoserine + L-cysteine = L,L-cystathionine + succinate + H(+). Its pathway is amino-acid biosynthesis; L-methionine biosynthesis via de novo pathway; L-cystathionine from O-succinyl-L-homoserine: step 1/1. Catalyzes the formation of L-cystathionine from O-succinyl-L-homoserine (OSHS) and L-cysteine, via a gamma-replacement reaction. In the absence of thiol, catalyzes gamma-elimination to form 2-oxobutanoate, succinate and ammonia. This is Putative cystathionine gamma-synthase YML082W from Saccharomyces cerevisiae (strain ATCC 204508 / S288c) (Baker's yeast).